Reading from the N-terminus, the 57-residue chain is U13-myrmicitoxin-Mri1a (57 aa).

Positions 1–23 (MKIIHVLLLVAVVAITMSPSIMA) are cleaved as a signal peptide. Residues 24-29 (ESVAEA) constitute a propeptide that is removed on maturation. Glu56 bears the Glutamic acid 1-amide mark.

Expressed by the venom gland.

The protein resides in the secreted. In terms of biological role, induces paralysis 1 hour after injection into insects (blowfly L.caesar) but does not appear to be lethal. In Manica rubida (European giant red ant), this protein is U13-myrmicitoxin-Mri1a.